A 92-amino-acid polypeptide reads, in one-letter code: Alpha-conotoxin-like Mi20.2 (92 aa).

The N-terminal stretch at Met1 to Glu24 is a signal peptide. Positions Gln25 to Arg45 are excised as a propeptide. Glu49 bears the 4-carboxyglutamate mark. Position 55 is a 4-hydroxyproline (Pro55). 4 disulfides stabilise this stretch: Cys63–Cys72, Cys68–Cys80, Cys73–Cys90, and Cys78–Cys92.

Belongs to the conotoxin D superfamily. As to quaternary structure, hetero-, homo- or pseudo-homodimer (identical sequence, different post-translational modifications). As to expression, expressed by the venom duct.

It is found in the secreted. Alpha-conotoxins act on postsynaptic membranes, they bind to the nicotinic acetylcholine receptors (nAChR) and thus inhibit them. Through its two C-terminal domains, this homodimeric protein would bind to two nAChR allosteric sites, located outside the nAChR C-loop of the principal binding face and at the adjacent binding interface in a clockwise direction. This toxin specifically blocks mammalian neuronal nAChR of the alpha-7/CHRNA7, alpha-3-beta-2/CHRNA3-CHRNB2 and alpha-4-beta-2/CHRNA4-CHRNB2 subtypes. The protein is Alpha-conotoxin-like Mi20.2 of Conus miles (Soldier cone).